A 595-amino-acid polypeptide reads, in one-letter code: DNA damage-binding protein CMR1 (595 aa).

The interval 20–79 (ALLDSLGLDPAGASSPFGSSPAPTSNKTKPKPKPAPKKRKAAAVIAVDEGPRRRSGRIAG) is disordered. A compositionally biased stretch (low complexity) spans 29 to 46 (PAGASSPFGSSPAPTSNK). The segment covering 47-60 (TKPKPKPAPKKRKA) has biased composition (basic residues). WD repeat units lie at residues 185-226 (VTNE…MEKP), 255-297 (HAKN…ELFS), 300-339 (DEDL…RESG), and 349-389 (GRGA…SISS). Residues 397–429 (AIEEEEEGTSTLSGQSSSLPHDTHPTRESDYST) are disordered. Residues 405–415 (TSTLSGQSSSL) show a composition bias toward low complexity. Residues 417-426 (HDTHPTRESD) are compositionally biased toward basic and acidic residues. WD repeat units lie at residues 448–487 (QHGK…SLVD), 519–556 (LRAQ…VGLW), and 558–595 (DDVT…GDHI).

Belongs to the WD repeat DDB2/WDR76 family.

Its function is as follows. DNA-binding protein that binds to both single- and double-stranded DNA. Binds preferentially to UV-damaged DNA. May be involved in DNA-metabolic processes. The protein is DNA damage-binding protein CMR1 of Cryptococcus neoformans var. neoformans serotype D (strain B-3501A) (Filobasidiella neoformans).